We begin with the raw amino-acid sequence, 622 residues long: Peptidoglycan O-acetyltransferase OatA (622 aa).

Helical transmembrane passes span 11 to 31 (YVPS…AYHL), 39 to 59 (GFIG…NILL), 81 to 101 (LIPA…FFHP), 143 to 163 (LWSL…LLVF), 173 to 193 (LLKI…ILYV), 212 to 232 (LLSG…PVVP), 237 to 257 (AVLN…TAFV), 267 to 287 (GGLL…SHPA), 307 to 327 (YGIY…LEIT), 334 to 354 (AILQ…FIET), and 387 to 407 (IAGV…VLSV). The tract at residues 412-467 (EKQQTSVKTTTSTPDEKKDDKKEDKATKDKEADSNKASEQKETQKPDNKNKSAATP) is disordered. Positions 413 to 424 (KQQTSVKTTTST) are enriched in low complexity. The segment covering 425 to 461 (PDEKKDDKKEDKATKDKEADSNKASEQKETQKPDNKN) has biased composition (basic and acidic residues). Catalysis depends on residues S480, D600, and H603.

The protein belongs to the acyltransferase 3 family.

The protein localises to the cell membrane. Its subcellular location is the secreted. The protein resides in the cell wall. In terms of biological role, responsible for O-acetylation at the C6-hydroxyl group of N-acetylmuramyl residues, forming the corresponding N,6-O-diacetylmuramic acid of the peptidoglycan. O-acetylation of the peptidoglycan is the major determinant for lysozyme resistance. Critical for virulence and escape from innate immune response of the host. Involved at both early and later stages of listeriosis in the mouse model of infection. Required for successful host colonization and for intracellular survival of bacteria in macrophages of the infected host. Controls the production of inflammatory mediators in the liver of the infected host. Confers resistance to host antimicrobial molecules and to cell wall-targeting molecules such as beta-lactam antibiotics and bacteriocins. This chain is Peptidoglycan O-acetyltransferase OatA, found in Listeria monocytogenes serovar 1/2a (strain ATCC BAA-679 / EGD-e).